We begin with the raw amino-acid sequence, 840 residues long: MNEHRREPHRRSGYQDDSAFTNTEKLVDELDHNVEPEQLLEKNRTDFKLMYVIVKFYRWFNNLSFITRWITIWFPLAGALVIPLAVGVSPYPNAKLGGVRIFWIFVWLEVAWGGFWVSRVIARLLPYILYPLMGILPFTMYKYTVILTALEMPLAIFFCSIVCVCTFSPIMIGKGNFTSTTVTTTTSATATPTASASSNAVESVFVTKTAASVPSWIKVITKILGAAVVTSIVLLLEKIFLHFIGFHYHEVQYQYRITDNKRNTAVLAKLLTAALDAPYHDSPRVRRQDYLLGLIDTRSMSESKGSGNGKLRKVKKISKNAKRIFSKTRNAISTAFTDMLGKHAKDLTPEQEFILETIRSKKKCLALARKIWYSLVPEGEDCFQKEDLIGLIPDDEINDIFHILDNDYSRTVTLDEMEQFTREISIEFRSISSSLRDVDLALGKLDRVGLGVVGIIAVLTFISFLDTSFATILAAFGTTLLSLSFVFSTSAQELMSSIIFLFSKHPFDISDVVIVNNIKYEVVSLSLLFTVFRTMGGSTVQAPNSLLNTLFIENLRRSQPQSETITIVSPFATDFKQLERLRDLLLTFVKENERDFRPIIDLNVSDFSTLDSLKFTVTYYYKSNWQNVSLQCVRRNKFMCALKNAIATTNLPAVADPVRGSPDYPFVIEQYNLERPEYSKTASRPQFSDISSTASSNSLSNKPGFAHSESRNYHTHDEDNSSDDNHKREDRGHLPAQYLRQSVATWQIPNLISAIEAYDSQNESSQENATYTVVESNGNANGDNTATNSQGATDNGQTTTNTTQNNVDNTQATTDNTQANTDNMQVAIDYSQNMDGQIQY.

The Cytoplasmic portion of the chain corresponds to 1–68; the sequence is MNEHRREPHR…WFNNLSFITR (68 aa). The chain crosses the membrane as a helical span at residues 69 to 89; that stretch reads WITIWFPLAGALVIPLAVGVS. The Lumenal portion of the chain corresponds to 90–100; sequence PYPNAKLGGVR. Residues 101-121 form a helical membrane-spanning segment; sequence IFWIFVWLEVAWGGFWVSRVI. The Cytoplasmic segment spans residues 122 to 126; it reads ARLLP. The helical transmembrane segment at 127-147 threads the bilayer; it reads YILYPLMGILPFTMYKYTVIL. The Lumenal portion of the chain corresponds to 148–151; sequence TALE. The helical transmembrane segment at 152 to 172 threads the bilayer; the sequence is MPLAIFFCSIVCVCTFSPIMI. At 173–225 the chain is on the cytoplasmic side; sequence GKGNFTSTTVTTTTSATATPTASASSNAVESVFVTKTAASVPSWIKVITKILG. A helical membrane pass occupies residues 226–246; that stretch reads AAVVTSIVLLLEKIFLHFIGF. Topologically, residues 247 to 449 are lumenal; it reads HYHEVQYQYR…LALGKLDRVG (203 aa). The 36-residue stretch at 392–427 folds into the EF-hand domain; sequence IPDDEINDIFHILDNDYSRTVTLDEMEQFTREISIE. The chain crosses the membrane as a helical span at residues 450-491; sequence LGVVGIIAVLTFISFLDTSFATILAAFGTTLLSLSFVFSTSA. The Cytoplasmic segment spans residues 492–840; it reads QELMSSIIFL…SQNMDGQIQY (349 aa). Disordered regions lie at residues 677-730 and 775-819; these read EYSK…KRED and ESNG…NTQA. A compositionally biased stretch (low complexity) spans 688-700; it reads SDISSTASSNSLS. Residues 708–730 are compositionally biased toward basic and acidic residues; sequence SESRNYHTHDEDNSSDDNHKRED. Residues 776 to 819 show a composition bias toward low complexity; sequence SNGNANGDNTATNSQGATDNGQTTTNTTQNNVDNTQATTDNTQA.

Belongs to the MscS (TC 1.A.23) family.

Its subcellular location is the endoplasmic reticulum membrane. Functionally, regulates intracellular calcium levels and cell volume for survival in response to hypo-osmotic shock. Involved in maintaining vacuole integrity and protecting the nuclear envelope upon hypo-osmotic shock. The polypeptide is Mechanosensitive ion channel protein Msy2 (Schizosaccharomyces pombe (strain 972 / ATCC 24843) (Fission yeast)).